The following is a 777-amino-acid chain: Endonuclease MutS2 (777 aa).

328–335 (GPNTGGKT) contributes to the ATP binding site. One can recognise a Smr domain in the interval 702–777 (LDLRGKRYEE…GSGCTIATLG (76 aa)).

This sequence belongs to the DNA mismatch repair MutS family. MutS2 subfamily. Homodimer. Binds to stalled ribosomes, contacting rRNA.

In terms of biological role, endonuclease that is involved in the suppression of homologous recombination and thus may have a key role in the control of bacterial genetic diversity. Functionally, acts as a ribosome collision sensor, splitting the ribosome into its 2 subunits. Detects stalled/collided 70S ribosomes which it binds and splits by an ATP-hydrolysis driven conformational change. Acts upstream of the ribosome quality control system (RQC), a ribosome-associated complex that mediates the extraction of incompletely synthesized nascent chains from stalled ribosomes and their subsequent degradation. Probably generates substrates for RQC. This chain is Endonuclease MutS2, found in Streptococcus uberis (strain ATCC BAA-854 / 0140J).